We begin with the raw amino-acid sequence, 449 residues long: UDP-N-acetylglucosamine 1-carboxyvinyltransferase (449 aa).

Position 51–52 (51–52) interacts with phosphoenolpyruvate; that stretch reads KN. A UDP-N-acetyl-alpha-D-glucosamine-binding site is contributed by R121. The active-site Proton donor is the C145. C145 bears the 2-(S-cysteinyl)pyruvic acid O-phosphothioketal mark. UDP-N-acetyl-alpha-D-glucosamine-binding positions include 150–154, D333, and I355; that span reads RPVDQ.

Belongs to the EPSP synthase family. MurA subfamily.

Its subcellular location is the cytoplasm. It catalyses the reaction phosphoenolpyruvate + UDP-N-acetyl-alpha-D-glucosamine = UDP-N-acetyl-3-O-(1-carboxyvinyl)-alpha-D-glucosamine + phosphate. It functions in the pathway cell wall biogenesis; peptidoglycan biosynthesis. In terms of biological role, cell wall formation. Adds enolpyruvyl to UDP-N-acetylglucosamine. The polypeptide is UDP-N-acetylglucosamine 1-carboxyvinyltransferase (Burkholderia mallei (strain ATCC 23344)).